Reading from the N-terminus, the 323-residue chain is 1D-myo-inositol 2-acetamido-2-deoxy-alpha-D-glucopyranoside deacetylase (323 aa).

Positions 28, 31, and 163 each coordinate Zn(2+).

Belongs to the MshB deacetylase family. Zn(2+) is required as a cofactor.

The enzyme catalyses 1D-myo-inositol 2-acetamido-2-deoxy-alpha-D-glucopyranoside + H2O = 1D-myo-inositol 2-amino-2-deoxy-alpha-D-glucopyranoside + acetate. In terms of biological role, catalyzes the deacetylation of 1D-myo-inositol 2-acetamido-2-deoxy-alpha-D-glucopyranoside (GlcNAc-Ins) in the mycothiol biosynthesis pathway. In Streptomyces scabiei (strain 87.22), this protein is 1D-myo-inositol 2-acetamido-2-deoxy-alpha-D-glucopyranoside deacetylase.